The primary structure comprises 345 residues: Protein RecA (345 aa).

66–73 (GPESSGKT) is a binding site for ATP.

Belongs to the RecA family.

It is found in the cytoplasm. Functionally, can catalyze the hydrolysis of ATP in the presence of single-stranded DNA, the ATP-dependent uptake of single-stranded DNA by duplex DNA, and the ATP-dependent hybridization of homologous single-stranded DNAs. It interacts with LexA causing its activation and leading to its autocatalytic cleavage. The chain is Protein RecA from Acidithiobacillus ferrooxidans (strain ATCC 23270 / DSM 14882 / CIP 104768 / NCIMB 8455) (Ferrobacillus ferrooxidans (strain ATCC 23270)).